We begin with the raw amino-acid sequence, 1786 residues long: Laminin subunit beta-1 (1786 aa).

A signal peptide spans 1-21 (MGLLQVFAFGVLALWGTRVCA). The region spanning 31–270 (AEGSCYPATG…AVYDMVVRGN (240 aa)) is the Laminin N-terminal domain. N-linked (GlcNAc...) asparagine glycosylation is present at asparagine 120. Position 250 is a phosphoserine (serine 250). Disulfide bonds link cysteine 271–cysteine 280, cysteine 273–cysteine 298, cysteine 300–cysteine 309, cysteine 312–cysteine 332, cysteine 335–cysteine 344, cysteine 337–cysteine 362, cysteine 365–cysteine 374, cysteine 377–cysteine 395, cysteine 398–cysteine 411, cysteine 400–cysteine 426, cysteine 428–cysteine 437, cysteine 440–cysteine 455, cysteine 458–cysteine 472, cysteine 460–cysteine 479, cysteine 481–cysteine 490, cysteine 493–cysteine 507, cysteine 510–cysteine 522, cysteine 512–cysteine 529, and cysteine 531–cysteine 540. Laminin EGF-like domains lie at 271–334 (CFCY…ACKK), 335–397 (CNCN…LCEP), 398–457 (CTCD…GCKS), and 458–509 (CACN…GCRP). Asparagine 356 carries N-linked (GlcNAc...) asparagine glycosylation. The region spanning 510–540 (CDCDLGGALNNSCSEDSGQCSCLPHMIGRQC) is the Laminin EGF-like 5; truncated domain. Asparagine 519 is a glycosylation site (N-linked (GlcNAc...) asparagine). A Laminin IV type B domain is found at 549-767 (FTTLDHYIYE…IIFSISALIH (219 aa)). Asparagine 677 is a glycosylation site (N-linked (GlcNAc...) asparagine). 32 disulfides stabilise this stretch: cysteine 773/cysteine 785, cysteine 775/cysteine 792, cysteine 794/cysteine 803, cysteine 806/cysteine 818, cysteine 821/cysteine 833, cysteine 823/cysteine 840, cysteine 842/cysteine 851, cysteine 854/cysteine 864, cysteine 867/cysteine 876, cysteine 869/cysteine 883, cysteine 886/cysteine 895, cysteine 898/cysteine 914, cysteine 917/cysteine 933, cysteine 919/cysteine 944, cysteine 946/cysteine 955, cysteine 958/cysteine 973, cysteine 976/cysteine 990, cysteine 978/cysteine 997, cysteine 1000/cysteine 1009, cysteine 1012/cysteine 1025, cysteine 1028/cysteine 1040, cysteine 1030/cysteine 1054, cysteine 1056/cysteine 1065, cysteine 1068/cysteine 1081, cysteine 1084/cysteine 1096, cysteine 1086/cysteine 1103, cysteine 1105/cysteine 1114, cysteine 1117/cysteine 1129, cysteine 1132/cysteine 1144, cysteine 1134/cysteine 1151, cysteine 1153/cysteine 1162, and cysteine 1165/cysteine 1176. Laminin EGF-like domains follow at residues 773 to 820 (CECD…GCKP), 821 to 866 (CDCH…SCQP), 867 to 916 (CQCN…HCRP), 917 to 975 (CPCP…SCQP), 976 to 1027 (CQCH…DCRK), 1028 to 1083 (CVCN…GCGP), 1084 to 1131 (CNCN…ECRA), and 1132 to 1178 (CDCD…DCTP). The N-linked (GlcNAc...) asparagine glycan is linked to asparagine 1041. The tract at residues 1179–1397 (CHQCFALWDA…LDLSAVAQMT (219 aa)) is domain II. N-linked (GlcNAc...) asparagine glycans are attached at residues asparagine 1195, asparagine 1279, asparagine 1336, and asparagine 1343. The stretch at 1216-1315 (YRETVDSVEK…LEFIKNSDIQ (100 aa)) forms a coiled coil. Residues 1368-1388 (KEQQEEQARLLDELAGKLQSL) are a coiled coil. Positions 1398–1430 (CGTPPGADCSESECGGPNCRTDEGEKKCGGPGC) are domain alpha. Positions 1431–1786 (GGLVTVAHSA…EKVAVYSTCL (356 aa)) are domain I. Positions 1448–1778 (DRDVLSALAE…RSLLKDISEK (331 aa)) form a coiled coil. An N-linked (GlcNAc...) asparagine glycan is attached at asparagine 1487. A Phosphoserine modification is found at serine 1496. 2 N-linked (GlcNAc...) asparagine glycosylation sites follow: asparagine 1542 and asparagine 1643. Serine 1666 carries the post-translational modification Phosphoserine.

In terms of assembly, laminin is a complex glycoprotein, consisting of three different polypeptide chains (alpha, beta, gamma), which are bound to each other by disulfide bonds into a cross-shaped molecule comprising one long and three short arms with globules at each end. Beta-1 is a subunit of laminin-1 (laminin-111 or EHS laminin), laminin-2 (laminin-211 or merosin), laminin-6 (laminin-311 or K-laminin), laminin-8 (laminin-411), laminin-10 (laminin-511) and laminin-12 (laminin-213). Interacts with ITGB1. Widely expressed in the embryo. High levels are detected in the cerebellar basement membrane, at postnatal day 7.

Its subcellular location is the secreted. It localises to the extracellular space. The protein localises to the extracellular matrix. It is found in the basement membrane. Binding to cells via a high affinity receptor, laminin is thought to mediate the attachment, migration and organization of cells into tissues during embryonic development by interacting with other extracellular matrix components. Involved in the organization of the laminar architecture of the cerebral cortex. It is probably required for the integrity of the basement membrane/glia limitans that serves as an anchor point for the endfeet of radial glial cells and as a physical barrier to migrating neurons. Radial glial cells play a central role in cerebral cortical development, where they act both as the proliferative unit of the cerebral cortex and a scaffold for neurons migrating toward the pial surface. This Mus musculus (Mouse) protein is Laminin subunit beta-1 (Lamb1).